A 272-amino-acid chain; its full sequence is Ribonuclease HII (272 aa).

Residues 87–272 (KYVAGVDEVG…HRMSFLKNIL (186 aa)) form the RNase H type-2 domain. A divalent metal cation contacts are provided by Asp-93, Glu-94, and Asp-188.

Belongs to the RNase HII family. It depends on Mn(2+) as a cofactor. Mg(2+) is required as a cofactor.

Its subcellular location is the cytoplasm. The catalysed reaction is Endonucleolytic cleavage to 5'-phosphomonoester.. Endonuclease that specifically degrades the RNA of RNA-DNA hybrids. This Clostridium perfringens (strain SM101 / Type A) protein is Ribonuclease HII.